A 234-amino-acid chain; its full sequence is Cytidylate kinase (234 aa).

Residue 10-18 (GYSACGKST) participates in ATP binding.

The protein belongs to the cytidylate kinase family. Type 1 subfamily.

The protein localises to the cytoplasm. The enzyme catalyses CMP + ATP = CDP + ADP. It carries out the reaction dCMP + ATP = dCDP + ADP. This chain is Cytidylate kinase, found in Cytophaga hutchinsonii (strain ATCC 33406 / DSM 1761 / CIP 103989 / NBRC 15051 / NCIMB 9469 / D465).